The chain runs to 261 residues: Undecaprenyl-diphosphatase (261 aa).

A run of 7 helical transmembrane segments spans residues 38–58 (RSDFFNIVIQAGAILAITFVF), 75–95 (RDYVMKLATAFLITAVVGLAV), 106–126 (IQPIAWALIIGGIWILIAESV), 136–156 (VTWSVAIAVGLAQVVAGVFPG), 181–201 (FSFLVGIPTMFSASSYACFEL), 217–237 (VAFVAAMLTGFAVVKWLLGYI), and 241–261 (SFAPFAYYRIALGLVLLTWLT).

The protein belongs to the UppP family.

The protein localises to the cell inner membrane. The enzyme catalyses di-trans,octa-cis-undecaprenyl diphosphate + H2O = di-trans,octa-cis-undecaprenyl phosphate + phosphate + H(+). In terms of biological role, catalyzes the dephosphorylation of undecaprenyl diphosphate (UPP). Confers resistance to bacitracin. The polypeptide is Undecaprenyl-diphosphatase (Xylella fastidiosa (strain Temecula1 / ATCC 700964)).